We begin with the raw amino-acid sequence, 201 residues long: Holliday junction resolvase RecU (201 aa).

A disordered region spans residues Met-1 to Pro-26. Residues Thr-87, Asp-89, Glu-102, and Gln-121 each coordinate Mg(2+).

This sequence belongs to the RecU family. Mg(2+) is required as a cofactor.

The protein resides in the cytoplasm. The catalysed reaction is Endonucleolytic cleavage at a junction such as a reciprocal single-stranded crossover between two homologous DNA duplexes (Holliday junction).. Endonuclease that resolves Holliday junction intermediates in genetic recombination. Cleaves mobile four-strand junctions by introducing symmetrical nicks in paired strands. Promotes annealing of linear ssDNA with homologous dsDNA. Required for DNA repair, homologous recombination and chromosome segregation. This Listeria monocytogenes serotype 4a (strain HCC23) protein is Holliday junction resolvase RecU.